A 330-amino-acid polypeptide reads, in one-letter code: Beta-ketoacyl-[acyl-carrier-protein] synthase III (330 aa).

Catalysis depends on residues cysteine 114 and histidine 257. The tract at residues glutamine 258–arginine 262 is ACP-binding. Residue asparagine 287 is part of the active site.

The protein belongs to the thiolase-like superfamily. FabH family. In terms of assembly, homodimer.

It is found in the cytoplasm. The catalysed reaction is malonyl-[ACP] + acetyl-CoA + H(+) = 3-oxobutanoyl-[ACP] + CO2 + CoA. It participates in lipid metabolism; fatty acid biosynthesis. Catalyzes the condensation reaction of fatty acid synthesis by the addition to an acyl acceptor of two carbons from malonyl-ACP. Catalyzes the first condensation reaction which initiates fatty acid synthesis and may therefore play a role in governing the total rate of fatty acid production. Possesses both acetoacetyl-ACP synthase and acetyl transacylase activities. Its substrate specificity determines the biosynthesis of branched-chain and/or straight-chain of fatty acids. In Oleidesulfovibrio alaskensis (strain ATCC BAA-1058 / DSM 17464 / G20) (Desulfovibrio alaskensis), this protein is Beta-ketoacyl-[acyl-carrier-protein] synthase III.